Here is a 614-residue protein sequence, read N- to C-terminus: Glucosidase 2 subunit beta (614 aa).

Residues 1-20 (MGLHTLLLLLLLRISASAAA) form the signal peptide. N-linked (GlcNAc...) asparagine glycosylation occurs at asparagine 115. 3 stretches are compositionally biased toward basic and acidic residues: residues 194–222 (EEER…KKAS), 231–272 (QENH…HDPE), and 324–351 (TGEK…HSEE). Positions 194–396 (EEERLRKEKE…SHESDDEYVD (203 aa)) are disordered. Residues 352 to 364 (THEDESDVPESAE) show a composition bias toward acidic residues. Residues 372 to 382 (SEVEDDRHKYD) are compositionally biased toward basic and acidic residues. Positions 383–396 (DEDFSHESDDEYVD) are enriched in acidic residues. One can recognise an MRH domain in the interval 497 to 592 (DQCFESKEGK…VLSTPALCDE (96 aa)). Disulfide bonds link cysteine 499-cysteine 512, cysteine 549-cysteine 578, and cysteine 563-cysteine 590.

As to quaternary structure, heterodimer of a catalytic alpha subunit and a beta subunit.

It is found in the endoplasmic reticulum. The protein operates within glycan metabolism; N-glycan metabolism. In terms of biological role, regulatory subunit of glucosidase II. May be required for defense response elicited by pathogen-associated molecular patterns (PAMPs). In Oryza sativa subsp. indica (Rice), this protein is Glucosidase 2 subunit beta.